The primary structure comprises 232 residues: Small ribosomal subunit protein uS3 (232 aa).

The KH type-2 domain maps to 39–107 (IRKFLKTKLY…DIAINIKEER (69 aa)). A compositionally biased stretch (basic and acidic residues) spans 213–222 (QADKNEDTSP). The disordered stretch occupies residues 213–232 (QADKNEDTSPKKPRRARRGK). The span at 223-232 (KKPRRARRGK) shows a compositional bias: basic residues.

It belongs to the universal ribosomal protein uS3 family. As to quaternary structure, part of the 30S ribosomal subunit. Forms a tight complex with proteins S10 and S14.

In terms of biological role, binds the lower part of the 30S subunit head. Binds mRNA in the 70S ribosome, positioning it for translation. In Campylobacter fetus subsp. fetus (strain 82-40), this protein is Small ribosomal subunit protein uS3.